A 459-amino-acid polypeptide reads, in one-letter code: ATP-dependent protease ATPase subunit HslU (459 aa).

ATP contacts are provided by residues Val-18, 60-65 (GVGKTE), Asp-269, Glu-337, and Arg-409.

The protein belongs to the ClpX chaperone family. HslU subfamily. In terms of assembly, a double ring-shaped homohexamer of HslV is capped on each side by a ring-shaped HslU homohexamer. The assembly of the HslU/HslV complex is dependent on binding of ATP.

It localises to the cytoplasm. Its function is as follows. ATPase subunit of a proteasome-like degradation complex; this subunit has chaperone activity. The binding of ATP and its subsequent hydrolysis by HslU are essential for unfolding of protein substrates subsequently hydrolyzed by HslV. HslU recognizes the N-terminal part of its protein substrates and unfolds these before they are guided to HslV for hydrolysis. In Myxococcus xanthus (strain DK1622), this protein is ATP-dependent protease ATPase subunit HslU.